Reading from the N-terminus, the 375-residue chain is uncharacterized protein (375 aa).

7 consecutive transmembrane segments (helical) span residues 21 to 41 (LLLLIPLLVGLTLIIYGIVLF), 66 to 86 (IIVFVVGSIILFFTLASFCVS), 160 to 180 (LVGVLIALNLALSLIEIPGIV), 203 to 223 (LVGLLSTSLVALITPWLHLLI), 234 to 254 (FYMVNDFLVLWIFYFFFFHLF), 289 to 309 (VISFLCGFIEGLGFYFGYFLI), and 338 to 358 (FFLMTTTAIFSIKYIFEMLFF).

The protein resides in the cell membrane. This is an uncharacterized protein from Mycoplasma genitalium (strain ATCC 33530 / DSM 19775 / NCTC 10195 / G37) (Mycoplasmoides genitalium).